A 992-amino-acid chain; its full sequence is Meckelin (992 aa).

The signal sequence occupies residues 1-36 (MVTRTRPVAAMAVRSRSSSRTGTAYLLLVLCEVSWA). The cysteine-rich stretch occupies residues 37–280 (QIFSFPFRRP…FHYIFESTAG (244 aa)). Over 37–516 (QIFSFPFRRP…SVKYEMNQGD (480 aa)) the chain is Extracellular. 12 disulfides stabilise this stretch: Cys-49-Cys-62, Cys-65-Cys-78, Cys-80-Cys-97, Cys-100-Cys-114, Cys-117-Cys-127, Cys-129-Cys-150, Cys-153-Cys-170, Cys-173-Cys-184, Cys-186-Cys-197, Cys-237-Cys-246, Cys-253-Cys-268, and Cys-354-Cys-375. A glycan (N-linked (GlcNAc...) asparagine) is linked at Asn-242. A helical membrane pass occupies residues 517 to 545 (ASVHTDIALGVLGGLAVLSSLLKTAGWKR). The Cytoplasmic segment spans residues 546 to 555 (RVGSPMIDLQ). The chain crosses the membrane as a helical span at residues 556-587 (TVMKFLLYYAGDLANVFFIITVGTGLYWLIFF). Topologically, residues 588 to 600 (KAQKSVSVLLPMP) are extracellular. Residues 601-628 (VQEERFVTYVGCAFAMKALQFLHKFISQ) traverse the membrane as a helical segment. Residues 629-667 (ISIDIFFIDWERPKGKVLKAVEGEGGVRSATVPVSIWRT) lie on the Cytoplasmic side of the membrane. An intramembrane region (helical) is located at residues 668–676 (YFVANEWNE). Residues 668–698 (YFVANEWNEIQTVRKINPLFQVLTTLFFLEV) form a discontinuously helical membrane-spanning segment. Residues 677 to 685 (IQTVRKINP) lie within the membrane without spanning it. The segment at residues 686-698 (LFQVLTTLFFLEV) is an intramembrane region (helical). Topologically, residues 699–728 (VGFKNLALMDSSSSLSRNPSDYTAPYSRIL) are extracellular. The helical intramembrane region spans 729–754 (RYAVATAIWLVIGIIQVVFFAAFYER). The discontinuously helical transmembrane segment at 729-768 (RYAVATAIWLVIGIIQVVFFAAFYERFIEDKIRQFVDLCS) threads the bilayer. An intramembrane segment occupies 755–759 (FIEDK). The helical intramembrane region spans 760–768 (IRQFVDLCS). Topologically, residues 769-923 (MSNVSVFLLS…SIFYNDEGHS (155 aa)) are cytoplasmic. Positions 924-926 (FSS) form an intramembrane region, helical. Residues 924 to 949 (FSSVLYYGNEATLLIFDLLFFCVVDL) traverse the membrane as a discontinuously helical segment. Residues 927–933 (VLYYGNE) lie within the membrane without spanning it. Residues 934–949 (ATLLIFDLLFFCVVDL) constitute an intramembrane region (helical). The Extracellular portion of the chain corresponds to 950–954 (ACQDF). A helical membrane pass occupies residues 955–982 (VLASFLTYLQQEIFRFIRNTVGQKNLAT). The Cytoplasmic portion of the chain corresponds to 983–992 (KTLVDERFLI).

As to quaternary structure, homodimer. Part of the tectonic-like complex (also named B9 complex). Interacts with DNAJB9, DNAJC10 and mutated SFTPC. Interacts with SYNE2 during the early establishment of cell polarity. Interacts (via C-terminus) with FLNA. Interacts with TMEM218. Interacts with WNT5A. Interacts with ROR2.

The protein localises to the cell membrane. It is found in the endoplasmic reticulum membrane. Its subcellular location is the cytoplasm. The protein resides in the cytoskeleton. It localises to the cilium basal body. Its function is as follows. Part of the tectonic-like complex which is required for tissue-specific ciliogenesis and may regulate ciliary membrane composition. Involved in centrosome migration to the apical cell surface during early ciliogenesis. Required for ciliary structure and function, including a role in regulating length and appropriate number through modulating centrosome duplication. Is a key regulator of stereociliary bundle orientation. Required for epithelial cell branching morphology. Essential for endoplasmic reticulum-associated degradation (ERAD) of surfactant protein C (sftpc). Involved in the negative regulation of canonical Wnt signaling, and activation of the non-canonical cascade stimulated by WNT5A. In non-canonical Wnt signaling, it may act as ROR2 coreceptor. This is Meckelin (Tmem67) from Mus musculus (Mouse).